The following is a 126-amino-acid chain: Small ribosomal subunit protein uS12 (126 aa).

Residue Asp89 is modified to 3-methylthioaspartic acid.

This sequence belongs to the universal ribosomal protein uS12 family. Part of the 30S ribosomal subunit. Contacts proteins S8 and S17. May interact with IF1 in the 30S initiation complex.

Its function is as follows. With S4 and S5 plays an important role in translational accuracy. In terms of biological role, interacts with and stabilizes bases of the 16S rRNA that are involved in tRNA selection in the A site and with the mRNA backbone. Located at the interface of the 30S and 50S subunits, it traverses the body of the 30S subunit contacting proteins on the other side and probably holding the rRNA structure together. The combined cluster of proteins S8, S12 and S17 appears to hold together the shoulder and platform of the 30S subunit. The protein is Small ribosomal subunit protein uS12 of Sulfurimonas denitrificans (strain ATCC 33889 / DSM 1251) (Thiomicrospira denitrificans (strain ATCC 33889 / DSM 1251)).